The sequence spans 144 residues: Putative HTH-type transcriptional regulator aq_268 (144 aa).

The HTH rrf2-type domain maps to 2–133 (IFSDTVRYAL…KGTTIKDLIN (132 aa)).

This chain is Putative HTH-type transcriptional regulator aq_268, found in Aquifex aeolicus (strain VF5).